Reading from the N-terminus, the 477-residue chain is Cysteine--tRNA ligase (477 aa).

Cys29 is a Zn(2+) binding site. A 'HIGH' region motif is present at residues 31–41; that stretch reads PTVYDYPHLGH. Residues Cys209, His234, and Glu238 each coordinate Zn(2+). Positions 266-270 match the 'KMSKS' region motif; that stretch reads KMSKS. Position 269 (Lys269) interacts with ATP.

This sequence belongs to the class-I aminoacyl-tRNA synthetase family. The cofactor is Zn(2+).

The protein localises to the cytoplasm. The catalysed reaction is tRNA(Cys) + L-cysteine + ATP = L-cysteinyl-tRNA(Cys) + AMP + diphosphate. This chain is Cysteine--tRNA ligase (cysS), found in Pyrococcus abyssi (strain GE5 / Orsay).